Reading from the N-terminus, the 439-residue chain is Probable E3 ubiquitin-protein ligase makorin-1 (439 aa).

3 C3H1-type zinc fingers span residues Trp-18 to Ser-45, Lys-48 to Pro-74, and Glu-163 to Val-190. The interval Lys-73 to Ser-118 is disordered. Residues Cys-191–His-218 are makorin-type Cys-His. The RING-type zinc-finger motif lies at Cys-236–Arg-290. Residues Gly-319–Pro-348 form a C3H1-type 4 zinc finger. Residues Leu-352–Thr-371 are disordered. Residues Gln-358–Asn-368 are compositionally biased toward low complexity.

It carries out the reaction S-ubiquitinyl-[E2 ubiquitin-conjugating enzyme]-L-cysteine + [acceptor protein]-L-lysine = [E2 ubiquitin-conjugating enzyme]-L-cysteine + N(6)-ubiquitinyl-[acceptor protein]-L-lysine.. It functions in the pathway protein modification; protein ubiquitination. In terms of biological role, E3 ubiquitin ligase catalyzing the covalent attachment of ubiquitin moieties onto substrate proteins. In Danio rerio (Zebrafish), this protein is Probable E3 ubiquitin-protein ligase makorin-1.